Here is a 198-residue protein sequence, read N- to C-terminus: Protein GrpE (198 aa).

The disordered stretch occupies residues 1-32 (MTTEKETATPADVEVASQEEQIDQTTEAQVEE).

The protein belongs to the GrpE family. As to quaternary structure, homodimer.

It is found in the cytoplasm. In terms of biological role, participates actively in the response to hyperosmotic and heat shock by preventing the aggregation of stress-denatured proteins, in association with DnaK and GrpE. It is the nucleotide exchange factor for DnaK and may function as a thermosensor. Unfolded proteins bind initially to DnaJ; upon interaction with the DnaJ-bound protein, DnaK hydrolyzes its bound ATP, resulting in the formation of a stable complex. GrpE releases ADP from DnaK; ATP binding to DnaK triggers the release of the substrate protein, thus completing the reaction cycle. Several rounds of ATP-dependent interactions between DnaJ, DnaK and GrpE are required for fully efficient folding. This chain is Protein GrpE, found in Haemophilus ducreyi (strain 35000HP / ATCC 700724).